We begin with the raw amino-acid sequence, 101 residues long: Urease subunit beta (101 aa).

This sequence belongs to the urease beta subunit family. In terms of assembly, heterotrimer of UreA (gamma), UreB (beta) and UreC (alpha) subunits. Three heterotrimers associate to form the active enzyme.

Its subcellular location is the cytoplasm. The enzyme catalyses urea + 2 H2O + H(+) = hydrogencarbonate + 2 NH4(+). The protein operates within nitrogen metabolism; urea degradation; CO(2) and NH(3) from urea (urease route): step 1/1. The protein is Urease subunit beta of Stutzerimonas stutzeri (strain A1501) (Pseudomonas stutzeri).